The sequence spans 887 residues: MRLVNSLGRRKILLILAVIVAFSTVLLFAKLWGRKTSSTLDEVGSKTHGDLTAENKNGGYLPEEEIPDQPPATGAFNYGEALQKAIFFYECQRSGKLDPSTLRLNWRGDSGLDDGKDAGIDLTGGWYDAGDHVKFNLPMSYSAAMLGWAVYEYEDAFKQSGQYNHILNNIKWACDYFIKCHPEKDVYYYQVGDGHADHAWWGPAEVMPMERPSYKVDRSSPGSTVVAETSAALAIASIIFKKVDGEYSKECLKHAKELFEFADTTKSDDGYTAANGFYNSWSGFYDELSWAAVWLYLATNDSSYLDKAESYSDKWGYEPQTNIPKYKWAQCWDDVTYGTYLLLARIKNDNGKYKEAIERHLDWWTTGYNGERITYTPKGLAWLDQWGSLRYATTTAFLACVYSDWENGDKEKAKTYLEFARSQADYALGSTGRSFVVGFGENPPKRPHHRTAHGSWADSQMEPPEHRHVLYGALVGGPDSTDNYTDDISNYTCNEVACDYNAGFVGLLAKMYKLYGGSPDPKFNGIEEVPEDEIFVEAGVNASGNNFIEIKAIVNNKSGWPARVCENLSFRYFINIEEIVNAGKSASDLQVSSSYNQGAKLSDVKHYKDNIYYVEVDLSGTKIYPGGQSAYKKEVQFRISAPEGTVFNPENDYSYQGLSAGTVVKSEYIPVYDAGVLVFGREPGSASKSTSKDNGLSKATPTVKTESQPTAKHTQNPASDFKTPANQNSVKKDQGIKGEVVLQYANGNAGATSNSINPRFKIINNGTKAINLSDVKIRYYYTKEGGASQNFWCDWSSAGNSNVTGNFFNLSSPKEGADTCLEVGFGSGAGTLDPGGSVEVQIRFSKEDWSNYNQSNDYSFNPSASDYTDWNRVTLYISNKLVYGKEP.

The first 55 residues, 1-55, serve as a signal peptide directing secretion; it reads MRLVNSLGRRKILLILAVIVAFSTVLLFAKLWGRKTSSTLDEVGSKTHGDLTAEN. The interval 40-66 is disordered; sequence LDEVGSKTHGDLTAENKNGGYLPEEEI. Residues 43 to 53 are compositionally biased toward basic and acidic residues; it reads VGSKTHGDLTA. The interval 56 to 518 is catalytic; the sequence is KNGGYLPEEE…AKMYKLYGGS (463 aa). The Nucleophile role is filled by D131. A disordered region spans residues 441–460; it reads ENPPKRPHHRTAHGSWADSQ. Catalysis depends on residues H448, D486, and E495. The region spanning 529-684 is the CBM3 1 domain; the sequence is VPEDEIFVEA…GVLVFGREPG (156 aa). The segment at 684-730 is disordered; the sequence is GSASKSTSKDNGLSKATPTVKTESQPTAKHTQNPASDFKTPANQNSV. The segment covering 686-729 has biased composition (polar residues); the sequence is ASKSTSKDNGLSKATPTVKTESQPTAKHTQNPASDFKTPANQNS. Positions 736–887 constitute a CBM3 2 domain; the sequence is IKGEVVLQYA…SNKLVYGKEP (152 aa).

This sequence belongs to the glycosyl hydrolase 9 (cellulase E) family.

The catalysed reaction is Endohydrolysis of (1-&gt;4)-beta-D-glucosidic linkages in cellulose, lichenin and cereal beta-D-glucans.. It participates in glycan metabolism; cellulose degradation. Functionally, this enzyme catalyzes the endohydrolysis of 1,4-beta-glucosidic linkages in cellulose, lichenin and cereal beta-D-glucans. Principally active against barley beta-glucan. The protein is Endoglucanase 1 (celI) of Acetivibrio thermocellus (strain ATCC 27405 / DSM 1237 / JCM 9322 / NBRC 103400 / NCIMB 10682 / NRRL B-4536 / VPI 7372) (Clostridium thermocellum).